A 469-amino-acid polypeptide reads, in one-letter code: Glutamate--tRNA ligase (469 aa).

Residues 11-21 carry the 'HIGH' region motif; that stretch reads PSPTGFIHLGN. Residues 118 to 131 are compositionally biased toward basic and acidic residues; the sequence is GEKPRYDGTWRPEP. Residues 118–139 are disordered; it reads GEKPRYDGTWRPEPGKVLPEPP. The short motif at 243 to 247 is the 'KMSKS' region element; that stretch reads KMSKR. K246 provides a ligand contact to ATP.

The protein belongs to the class-I aminoacyl-tRNA synthetase family. Glutamate--tRNA ligase type 1 subfamily. As to quaternary structure, monomer.

Its subcellular location is the cytoplasm. The catalysed reaction is tRNA(Glu) + L-glutamate + ATP = L-glutamyl-tRNA(Glu) + AMP + diphosphate. Functionally, catalyzes the attachment of glutamate to tRNA(Glu) in a two-step reaction: glutamate is first activated by ATP to form Glu-AMP and then transferred to the acceptor end of tRNA(Glu). The protein is Glutamate--tRNA ligase of Burkholderia mallei (strain NCTC 10247).